The sequence spans 97 residues: uncharacterized protein (97 aa).

This is an uncharacterized protein from Sulfolobus islandicus filamentous virus (isolate Iceland/Hveragerdi) (SIFV).